A 150-amino-acid polypeptide reads, in one-letter code: Large ribosomal subunit protein bL9 (150 aa).

It belongs to the bacterial ribosomal protein bL9 family.

Binds to the 23S rRNA. The protein is Large ribosomal subunit protein bL9 of Ralstonia pickettii (strain 12J).